We begin with the raw amino-acid sequence, 1202 residues long: CHD3-type chromatin-remodeling factor CHR7 (1202 aa).

Chromo domains lie at 45-109 (GEIE…HPHL) and 142-201 (KTVD…RDKY). Positions 237-405 (RYSWSKKTNV…FALMHFLDAD (169 aa)) constitute a Helicase ATP-binding domain. ATP is bound at residue 250 to 257 (DEMGLGKT). Positions 356-359 (DEGH) match the DEAH box motif. The 152-residue stretch at 528–679 (LLDKMMVKLK…HLVVGKQHLC (152 aa)) folds into the Helicase C-terminal domain. The interval 838–872 (TSDEEEEADEPEAARQRKPRTVTRPYRKRARDNSE) is disordered. Positions 853 to 867 (QRKPRTVTRPYRKRA) are enriched in basic residues.

Belongs to the SNF2/RAD54 helicase family.

It localises to the nucleus. Chromatin remodeling factor that represses the expression of embryonic trait genes upon and after seed germination and thus enables the developmental switch to post-germinative growth. In Arabidopsis thaliana (Mouse-ear cress), this protein is CHD3-type chromatin-remodeling factor CHR7.